Here is a 497-residue protein sequence, read N- to C-terminus: Cysteine--tRNA ligase (497 aa).

Cys32 lines the Zn(2+) pocket. Residues 34-44 (PTVYGEGHLGH) carry the 'HIGH' region motif. Cys228, His253, and Glu257 together coordinate Zn(2+). The short motif at 285–289 (KMGKS) is the 'KMSKS' region element. ATP is bound at residue Lys288.

The protein belongs to the class-I aminoacyl-tRNA synthetase family. As to quaternary structure, monomer. Zn(2+) serves as cofactor.

It is found in the cytoplasm. The catalysed reaction is tRNA(Cys) + L-cysteine + ATP = L-cysteinyl-tRNA(Cys) + AMP + diphosphate. This is Cysteine--tRNA ligase from Cytophaga hutchinsonii (strain ATCC 33406 / DSM 1761 / CIP 103989 / NBRC 15051 / NCIMB 9469 / D465).